Consider the following 389-residue polypeptide: (S)-8-oxocitronellyl enol synthase CYC1 (389 aa).

Residues 34–36 (TGI), 62–63 (RR), 80–81 (DV), 104–105 (AW), and Gln-138 each bind NADP(+). Active-site residues include Lys-142 and Tyr-174. Substrate is bound by residues Lys-142 and Tyr-174. Residues Tyr-174, Val-201, and 208-210 (SMM) contribute to the NADP(+) site. Ser-350 contacts substrate.

It belongs to the short-chain dehydrogenases/reductases (SDR) family. Highly divergent.

The catalysed reaction is (S)-8-oxocitronellyl enol + NADP(+) = (6E)-8-oxogeranial + NADPH + H(+). It catalyses the reaction (S)-8-oxocitronellyl enol + NAD(+) = (6E)-8-oxogeranial + NADH + H(+). In terms of biological role, iridoid synthase that catalyzes the first step in generation of the iridoid ring scaffold using the linear monoterpene (6E)-8-oxogeranial as substrate. Iridoids comprise a large family of distinctive bicyclic monoterpenes that possess a wide range of pharmacological activities, including anticancer, anti-inflammatory, antifungal and antibacterial activities. The polypeptide is (S)-8-oxocitronellyl enol synthase CYC1 (Camptotheca acuminata (Happy tree)).